A 243-amino-acid chain; its full sequence is Pyridoxine 5'-phosphate synthase (243 aa).

N9 serves as a coordination point for 3-amino-2-oxopropyl phosphate. 11-12 (DH) contributes to the 1-deoxy-D-xylulose 5-phosphate binding site. Position 20 (R20) interacts with 3-amino-2-oxopropyl phosphate. The active-site Proton acceptor is the H45. Residues R47 and H52 each contribute to the 1-deoxy-D-xylulose 5-phosphate site. E72 acts as the Proton acceptor in catalysis. Residue T102 participates in 1-deoxy-D-xylulose 5-phosphate binding. The active-site Proton donor is H193. 3-amino-2-oxopropyl phosphate-binding positions include G194 and 215 to 216 (GH).

It belongs to the PNP synthase family. Homooctamer; tetramer of dimers.

The protein resides in the cytoplasm. It catalyses the reaction 3-amino-2-oxopropyl phosphate + 1-deoxy-D-xylulose 5-phosphate = pyridoxine 5'-phosphate + phosphate + 2 H2O + H(+). The protein operates within cofactor biosynthesis; pyridoxine 5'-phosphate biosynthesis; pyridoxine 5'-phosphate from D-erythrose 4-phosphate: step 5/5. In terms of biological role, catalyzes the complicated ring closure reaction between the two acyclic compounds 1-deoxy-D-xylulose-5-phosphate (DXP) and 3-amino-2-oxopropyl phosphate (1-amino-acetone-3-phosphate or AAP) to form pyridoxine 5'-phosphate (PNP) and inorganic phosphate. The polypeptide is Pyridoxine 5'-phosphate synthase (Pectobacterium atrosepticum (strain SCRI 1043 / ATCC BAA-672) (Erwinia carotovora subsp. atroseptica)).